The following is a 342-amino-acid chain: Ferredoxin--NADP reductase (342 aa).

Cys17, Asp36, Gln44, Tyr49, Val89, Phe124, Asp289, and Thr330 together coordinate FAD.

This sequence belongs to the ferredoxin--NADP reductase type 2 family. As to quaternary structure, homodimer. The cofactor is FAD.

The enzyme catalyses 2 reduced [2Fe-2S]-[ferredoxin] + NADP(+) + H(+) = 2 oxidized [2Fe-2S]-[ferredoxin] + NADPH. This is Ferredoxin--NADP reductase from Rhodopseudomonas palustris (strain ATCC BAA-98 / CGA009).